The primary structure comprises 145 residues: Prefoldin subunit alpha (145 aa).

The protein belongs to the prefoldin alpha subunit family. In terms of assembly, heterohexamer of two alpha and four beta subunits.

The protein localises to the cytoplasm. Functionally, molecular chaperone capable of stabilizing a range of proteins. Seems to fulfill an ATP-independent, HSP70-like function in archaeal de novo protein folding. The chain is Prefoldin subunit alpha from Nitrosopumilus maritimus (strain SCM1).